We begin with the raw amino-acid sequence, 20 residues long: Large ribosomal subunit protein uL10 (20 aa).

Belongs to the universal ribosomal protein uL10 family. As to quaternary structure, part of the ribosomal stalk of the 50S ribosomal subunit. The N-terminus interacts with L11 and the large rRNA to form the base of the stalk. The C-terminus forms an elongated spine to which L12 dimers bind in a sequential fashion forming a multimeric L10(L12)X complex.

In terms of biological role, forms part of the ribosomal stalk, playing a central role in the interaction of the ribosome with GTP-bound translation factors. In Citrobacter freundii, this protein is Large ribosomal subunit protein uL10 (rplJ).